We begin with the raw amino-acid sequence, 319 residues long: Transcription factor VBP (319 aa).

Composition is skewed to low complexity over residues 1 to 31 and 143 to 158; these read MPGRAAHQEAAAAGGAAAEPTAAGGSAGAVA and ASASTGSPVSSSSTAV. 2 disordered regions span residues 1–35 and 139–186; these read MPGRAAHQEAAAAGGAAAEPTAAGGSAGAVAQQPE and EKEP…DPDC. Positions 159–180 are enriched in polar residues; the sequence is YQQSEAASSTESPPQNERNTPS. The region spanning 243–306 is the bZIP domain; it reads DEKYWTRRKK…GRCKNIVSKY (64 aa). The tract at residues 245 to 265 is basic motif; the sequence is KYWTRRKKNNVAAKRSRDARR. Residues 266–273 are leucine-zipper; that stretch reads LKENQITI.

It belongs to the bZIP family. PAR subfamily. As to quaternary structure, binds DNA as a homodimer or a heterodimer. Exists as a stable dimer in the absence of DNA. Isoform 1 and isoform 3 are expressed in a variety of somatic tissues, including liver, heart, intestine, stomach and kidney. Both isoforms are also expressed in hepatoma (LMH) cells and in embryonic fibroblast cell lines. Isoform 2 and isoform 4 are expressed in adult heart and intestine.

The protein resides in the nucleus. Its function is as follows. Transcription factor that binds to and transactivates the vitellogenin II (VTG2) promoter. Binds to the palindromic sequence 5'-GTTTACATAAAC-3'. This Gallus gallus (Chicken) protein is Transcription factor VBP (TEF).